A 25-amino-acid chain; its full sequence is Small ribosomal subunit protein eS32 (25 aa).

The segment at 1 to 25 (MRAKWRKKRMRRLKRKRRKMRARSK) is disordered.

It belongs to the eukaryotic ribosomal protein eS32 family. As to quaternary structure, component of the small ribosomal subunit.

In Spodoptera frugiperda (Fall armyworm), this protein is Small ribosomal subunit protein eS32 (RpL41).